A 136-amino-acid chain; its full sequence is MTNQWEPTTLNAWGREEAWLRSVVDSHQSFCGCNDPGFHLGLLLHSAGRHLGGPGGPQPPPAPGGPGVGGEGPRRFLPLPGLPANPEEPGHQRPPCPGGPGDAGGAGGVDAETGEGEWRPEDIAELLDGLEDAEKR.

The interval Ser-46–Arg-136 is disordered. A compositionally biased stretch (gly residues) spans Gly-99–Gly-108. Residues Ile-123 to Arg-136 are compositionally biased toward acidic residues.

This is an uncharacterized protein from Homo sapiens (Human).